The chain runs to 368 residues: PPE family immunomodulator PPE68 (368 aa).

Disordered stretches follow at residues 255–280 (LGTSPLSNHPLAGGSGPSAGAGLLRA) and 312–368 (AAAG…EDDW). The span at 312-327 (AAAGSSATGGAAPVGA) shows a compositional bias: low complexity. The span at 354–368 (REEDDEDDWDEEDDW) shows a compositional bias: acidic residues.

Belongs to the mycobacterial PPE family. In terms of assembly, homodimer. Interacts with PE35. PE35/PPE68 complex interacts with human TLR2.

The protein resides in the secreted. Its subcellular location is the cell wall. The protein localises to the cell membrane. It is found in the cell surface. Functionally, plays a major role in RD1-associated pathogenesis, and may contribute to the establishment and maintenance of M.tuberculosis infection. Together with PE35, stimulates the secretion of IL-10 and MCP-1 from human macrophages, via the interaction with human Toll-like receptor 2 (TLR2). The sequence is that of PPE family immunomodulator PPE68 (PPE68) from Mycobacterium tuberculosis (strain CDC 1551 / Oshkosh).